The primary structure comprises 97 residues: Large ribosomal subunit protein bL27 (97 aa).

A propeptide spanning residues 1-12 (MIKLNLSNLQHF) is cleaved from the precursor. Residues 13 to 38 (AHKKGGGSTSNGRDSQAKRLGAKAAD) form a disordered region.

Belongs to the bacterial ribosomal protein bL27 family. The N-terminus is cleaved by ribosomal processing cysteine protease Prp.

In Streptococcus equi subsp. equi (strain 4047), this protein is Large ribosomal subunit protein bL27.